Reading from the N-terminus, the 440-residue chain is Thymidine phosphorylase (440 aa).

It belongs to the thymidine/pyrimidine-nucleoside phosphorylase family. As to quaternary structure, homodimer.

It carries out the reaction thymidine + phosphate = 2-deoxy-alpha-D-ribose 1-phosphate + thymine. It functions in the pathway pyrimidine metabolism; dTMP biosynthesis via salvage pathway; dTMP from thymine: step 1/2. Its function is as follows. The enzymes which catalyze the reversible phosphorolysis of pyrimidine nucleosides are involved in the degradation of these compounds and in their utilization as carbon and energy sources, or in the rescue of pyrimidine bases for nucleotide synthesis. This chain is Thymidine phosphorylase, found in Klebsiella pneumoniae (strain 342).